A 339-amino-acid chain; its full sequence is Phenylalanine--tRNA ligase alpha subunit (339 aa).

Glu254 contacts Mg(2+).

It belongs to the class-II aminoacyl-tRNA synthetase family. Phe-tRNA synthetase alpha subunit type 1 subfamily. Tetramer of two alpha and two beta subunits. Mg(2+) serves as cofactor.

It is found in the cytoplasm. The catalysed reaction is tRNA(Phe) + L-phenylalanine + ATP = L-phenylalanyl-tRNA(Phe) + AMP + diphosphate + H(+). The sequence is that of Phenylalanine--tRNA ligase alpha subunit from Acetivibrio thermocellus (strain ATCC 27405 / DSM 1237 / JCM 9322 / NBRC 103400 / NCIMB 10682 / NRRL B-4536 / VPI 7372) (Clostridium thermocellum).